The primary structure comprises 396 residues: Purine ribonucleoside efflux pump NepI (396 aa).

Residues 1-21 (MSEFIAENRGADAITRPNWSA) are Cytoplasmic-facing. A helical membrane pass occupies residues 22 to 42 (VFSVAFCVACLIIVEFLPVSL). The Periplasmic segment spans residues 43 to 54 (LTPMAQDLGISE). Residues 55–75 (GVAGQSVTVTAFVAMFASLFI) traverse the membrane as a helical segment. Residues 76–85 (TQTIQATDRR) lie on the Cytoplasmic side of the membrane. A helical membrane pass occupies residues 86–106 (YVVILFAVLLTLSCLLVSFAN). Residue S107 is a topological domain, periplasmic. Residues 108 to 128 (FSLLLIGRACLGLALGGFWAM) form a helical membrane-spanning segment. Residues 129–147 (SASLTMRLVPPRTVPKALS) lie on the Cytoplasmic side of the membrane. The helical transmembrane segment at 148-168 (VIFGAVSIALVIAAPLGSFLG) threads the bilayer. Residues 169-175 (ELIGWRN) are Periplasmic-facing. A helical transmembrane segment spans residues 176 to 196 (VFNAAAAMGVLCIFWIIKSLP). At 197–215 (SLPGEPSHQKQNTFRLLQR) the chain is on the cytoplasmic side. Residues 216-236 (PGVMAGMIAIFMSFAGQFAFF) traverse the membrane as a helical segment. Topologically, residues 237–255 (TYIRPVYMNLAGFGVDGLT) are periplasmic. Residues 256 to 276 (LVLLSFGIASFVGTSLSSFIL) form a helical membrane-spanning segment. Residues 277–281 (KRSVK) lie on the Cytoplasmic side of the membrane. The helical transmembrane segment at 282 to 302 (LALAGAPFVLALSALVLTLWG) threads the bilayer. At 303-305 (SDK) the chain is on the periplasmic side. The helical transmembrane segment at 306-326 (IVATGVAIIWGLTFALIPVGW) threads the bilayer. The Cytoplasmic portion of the chain corresponds to 327–343 (STWITRSLADQAEKAGS). The helical transmembrane segment at 344–364 (IQVAVIQLANTCGAAIGGYAL) threads the bilayer. At 365–366 (DN) the chain is on the periplasmic side. Residues 367-387 (IGLTSPLMLSGTLMLLTALLV) traverse the membrane as a helical segment. Residues 388–396 (TAKVKMKKS) lie on the Cytoplasmic side of the membrane.

The protein belongs to the major facilitator superfamily. DHA1 family. NepI (TC 2.A.1.2.26) subfamily.

The protein localises to the cell inner membrane. It catalyses the reaction inosine(in) + H(+)(out) = inosine(out) + H(+)(in). The catalysed reaction is guanosine(in) + H(+)(out) = guanosine(out) + H(+)(in). In terms of biological role, involved in the efflux of purine ribonucleosides, such as inosine and guanosine. This is Purine ribonucleoside efflux pump NepI from Escherichia coli O1:K1 / APEC.